Consider the following 148-residue polypeptide: Large ribosomal subunit protein bL9 (148 aa).

The protein belongs to the bacterial ribosomal protein bL9 family.

Functionally, binds to the 23S rRNA. The polypeptide is Large ribosomal subunit protein bL9 (Geobacter metallireducens (strain ATCC 53774 / DSM 7210 / GS-15)).